We begin with the raw amino-acid sequence, 170 residues long: Adenine phosphoribosyltransferase (170 aa).

It belongs to the purine/pyrimidine phosphoribosyltransferase family. Homodimer.

The protein localises to the cytoplasm. It catalyses the reaction AMP + diphosphate = 5-phospho-alpha-D-ribose 1-diphosphate + adenine. It functions in the pathway purine metabolism; AMP biosynthesis via salvage pathway; AMP from adenine: step 1/1. Its function is as follows. Catalyzes a salvage reaction resulting in the formation of AMP, that is energically less costly than de novo synthesis. The sequence is that of Adenine phosphoribosyltransferase from Streptococcus suis (strain 98HAH33).